A 421-amino-acid chain; its full sequence is BEN domain-containing protein 5 (421 aa).

Lys133 carries the N6-acetyllysine modification. Positions 180–243 (RALYEELLRN…LNRRLQDVLL (64 aa)) form a coiled coil. Lys258 is covalently cross-linked (Glycyl lysine isopeptide (Lys-Gly) (interchain with G-Cter in SUMO2)). Residues 302–408 (GSGIWVDEEK…EKIMDINKSC (107 aa)) form the BEN domain.

Functionally, acts as a transcriptional repressor. In Homo sapiens (Human), this protein is BEN domain-containing protein 5 (BEND5).